Consider the following 469-residue polypeptide: Arginine biosynthesis bifunctional protein ArgJ, mitochondrial (469 aa).

6 residues coordinate substrate: T199, K228, T239, E325, N464, and T469. T239 serves as the catalytic Nucleophile.

It belongs to the ArgJ family. Heterodimer of an alpha and a beta chain. Post-translationally, the alpha and beta chains are autoproteolytically processed from a single precursor protein within the mitochondrion.

The protein resides in the mitochondrion matrix. It catalyses the reaction N(2)-acetyl-L-ornithine + L-glutamate = N-acetyl-L-glutamate + L-ornithine. It carries out the reaction L-glutamate + acetyl-CoA = N-acetyl-L-glutamate + CoA + H(+). It functions in the pathway amino-acid biosynthesis; L-arginine biosynthesis; L-ornithine and N-acetyl-L-glutamate from L-glutamate and N(2)-acetyl-L-ornithine (cyclic): step 1/1. Its pathway is amino-acid biosynthesis; L-arginine biosynthesis; N(2)-acetyl-L-ornithine from L-glutamate: step 1/4. In terms of biological role, catalyzes two activities which are involved in the cyclic version of arginine biosynthesis: the synthesis of acetylglutamate from glutamate and acetyl-CoA, and of ornithine by transacetylation between acetylornithine and glutamate. The chain is Arginine biosynthesis bifunctional protein ArgJ, mitochondrial from Neurospora crassa (strain ATCC 24698 / 74-OR23-1A / CBS 708.71 / DSM 1257 / FGSC 987).